Consider the following 189-residue polypeptide: Peptidyl-tRNA hydrolase (189 aa).

Position 14 (Tyr-14) interacts with tRNA. Residue His-19 is the Proton acceptor of the active site. 3 residues coordinate tRNA: Tyr-64, Asn-66, and Asn-112.

This sequence belongs to the PTH family. Monomer.

The protein resides in the cytoplasm. It catalyses the reaction an N-acyl-L-alpha-aminoacyl-tRNA + H2O = an N-acyl-L-amino acid + a tRNA + H(+). In terms of biological role, hydrolyzes ribosome-free peptidyl-tRNAs (with 1 or more amino acids incorporated), which drop off the ribosome during protein synthesis, or as a result of ribosome stalling. Catalyzes the release of premature peptidyl moieties from peptidyl-tRNA molecules trapped in stalled 50S ribosomal subunits, and thus maintains levels of free tRNAs and 50S ribosomes. This is Peptidyl-tRNA hydrolase from Dehalococcoides mccartyi (strain ATCC BAA-2100 / JCM 16839 / KCTC 5957 / BAV1).